A 519-amino-acid chain; its full sequence is Serine/threonine-protein kinase RIO3 (519 aa).

Phosphoserine is present on residues Ser-8 and Ser-112. At Tyr-122 the chain carries Phosphotyrosine. Positions 122-159 (YEDSDSSEDEVDWQDTRDDPYRPAKPIPTPKKGFIGKG) are disordered. The segment covering 124 to 134 (DSDSSEDEVDW) has biased composition (acidic residues). Ser-125, Ser-127, and Ser-128 each carry phosphoserine. The Protein kinase domain occupies 251–519 (ETITGCISTG…DGGPPILYDE (269 aa)). Residues 257–265 (ISTGKESVV) and Lys-290 contribute to the ATP site. Asp-406 functions as the Proton acceptor in the catalytic mechanism.

This sequence belongs to the protein kinase superfamily. RIO-type Ser/Thr kinase family. Interacts with CASP10. Interacts with IRF3; RIOK3 probably mediates the interaction of TBK1 with IRF3. Associated with 40S pre-ribosomal particles. It depends on Mg(2+) as a cofactor. Autophosphorylated (in vitro).

It is found in the cytoplasm. It carries out the reaction L-seryl-[protein] + ATP = O-phospho-L-seryl-[protein] + ADP + H(+). It catalyses the reaction L-threonyl-[protein] + ATP = O-phospho-L-threonyl-[protein] + ADP + H(+). Functionally, involved in regulation of type I interferon (IFN)-dependent immune response which plays a critical role in the innate immune response against DNA and RNA viruses. May act as an adapter protein essential for the recruitment of TBK1 to IRF3. Phosphorylates IFIH1 within the C-terminal region interfering with IFIH1 filament assembly on long dsRNA and resulting in attenuated IFIH1-signaling. Can inhibit CASP10 isoform 7-mediated activation of the NF-kappaB signaling pathway. May play a role in the biogenesis of the 40S ribosomal subunit. Involved in the processing of 21S pre-rRNA to the mature 18S rRNA. This Bos taurus (Bovine) protein is Serine/threonine-protein kinase RIO3 (RIOK3).